The following is a 510-amino-acid chain: ATP synthase subunit alpha (510 aa).

169–176 provides a ligand contact to ATP; it reads GDRQTGKT.

Belongs to the ATPase alpha/beta chains family. F-type ATPases have 2 components, CF(1) - the catalytic core - and CF(0) - the membrane proton channel. CF(1) has five subunits: alpha(3), beta(3), gamma(1), delta(1), epsilon(1). CF(0) has four main subunits: a(1), b(1), b'(1) and c(9-12).

The protein resides in the cell inner membrane. It catalyses the reaction ATP + H2O + 4 H(+)(in) = ADP + phosphate + 5 H(+)(out). Functionally, produces ATP from ADP in the presence of a proton gradient across the membrane. The alpha chain is a regulatory subunit. The sequence is that of ATP synthase subunit alpha from Rhodospirillum rubrum (strain ATCC 11170 / ATH 1.1.1 / DSM 467 / LMG 4362 / NCIMB 8255 / S1).